A 367-amino-acid chain; its full sequence is MNMSNKRNQQPSYIADHFSSLDQVITSLREAGLESSNLILGIDFTKSNEWTGRYSFNRKSLHAIGKRQNPYEKAISIIGRTLSPFDEDDLIPCFGFGDVTTRDQYVFSFYPENKSCDGLENAVKRYREIVPHLKLSGPTSFAPVIDAAINIVEQNNMQYHVLVIIADGQVTRNPDVPLGRLSPQEEATMNSIMAASHYPLSIVLVGVGDGPWDTMKQFDDNIPHREFDNFQFVNFTKIMSEHKDAAKKEAAFALAALMEIPFQYKATLSLNRKPVRSSHQHHKPLPPPPEVIERDNAVRSVPNQMTETAEKSDRLAPSTVPVCPICLTNPKDMAFSCGHTTCKECGVVITTCPLCRQPITTRIRLYT.

The 221-residue stretch at N37–L257 folds into the VWFA domain. An RING-type zinc finger spans residues C323 to R356.

Interacts with UBC30, GRXS17 and GLB3. Binds to and coactivates GAF1/IDD2 and ENY/IDD1. Widely expressed.

The protein localises to the cytoplasm. It is found in the nucleus. The enzyme catalyses S-ubiquitinyl-[E2 ubiquitin-conjugating enzyme]-L-cysteine + [acceptor protein]-L-lysine = [E2 ubiquitin-conjugating enzyme]-L-cysteine + N(6)-ubiquitinyl-[acceptor protein]-L-lysine.. Its function is as follows. Possesses E3 ubiquitin-protein ligase in vitro. Acts as upstream modulator of jasmonate (JA) signaling in response to various stimuli, such as JA-inhibited root growth, JA-inductive gene expression, coronatine-mediated pathogen susceptibility, wound-stimulated expression of JA-responsive genes and wound-induced JA biosynthesis. Controls fumonisin B1 (FB1)-triggered programmed cell death (PCD) by modulating the JA signaling pathway. May mediate salicylic acid (SA) suppression of JA signaling in FB1-induced responses. May mediate the formation of 'Lys-48'-linked multiubiquitin chains. Mediates the polyubiquitination and subsequent proteasomal degradation of the target protein GRXS17. This is E3 ubiquitin-protein ligase RGLG3 from Arabidopsis thaliana (Mouse-ear cress).